A 336-amino-acid polypeptide reads, in one-letter code: Sodium/bile acid cotransporter 7 (336 aa).

Residues 1–10 are Cytoplasmic-facing; sequence MGLIARVRKE. A helical transmembrane segment spans residues 11 to 31; that stretch reads WFIIGIVLVITFAKLQPSVGV. The Extracellular segment spans residues 32–37; the sequence is KGGPLH. Residues 38 to 58 form a helical membrane-spanning segment; that stretch reads PEITITYVAVSVIFFNSGLSL. Residues 59-71 lie on the Cytoplasmic side of the membrane; that stretch reads KTEELASALMHVK. A helical membrane pass occupies residues 72–92; the sequence is LHFFVQTFTLVFFPIAIWLLL. Residues 93-116 lie on the Extracellular side of the membrane; that stretch reads KVLALTAINEWLLRGLQTVACMPP. The helical transmembrane segment at 117–137 threads the bilayer; it reads PVSSAVILTKAVGGNEAAAIF. A topological domain (cytoplasmic) is located at residue N138. A helical transmembrane segment spans residues 139 to 159; the sequence is SAFGSFLGIVVTPLLLLVFLG. Topologically, residues 160–163 are extracellular; sequence SSSS. A helical transmembrane segment spans residues 164 to 184; sequence VPFTSIFSQLFMTVVVPLIVG. Topologically, residues 185-201 are cytoplasmic; the sequence is QVCRRFLRECLDRRKPP. The helical transmembrane segment at 202–222 threads the bilayer; sequence FGAVSSVVLLMIIYSTFCDTF. Over 223-233 the chain is Extracellular; it reads NNPNIELDHLS. Residues 234–254 form a helical membrane-spanning segment; the sequence is LLTVVFIIFSIQLSFMALIFF. Over 255 to 270 the chain is Cytoplasmic; it reads LSTRKSSGFSAADSVA. A helical transmembrane segment spans residues 271–291; the sequence is IMFCATHKSLTLGIPMLKIVF. Residues 292 to 298 lie on the Extracellular side of the membrane; that stretch reads EGYEHLS. A helical membrane pass occupies residues 299-319; that stretch reads LISVPLLIYHPAQILLGSVLL. Topologically, residues 320 to 336 are cytoplasmic; that stretch reads PSIKTWMSGRQKTLTPI.

The protein belongs to the bile acid:sodium symporter (BASS) (TC 2.A.28) family.

Its subcellular location is the cell membrane. It is found in the endoplasmic reticulum membrane. It localises to the golgi apparatus membrane. Its function is as follows. Involved in teeth and skeletal development. Has an essential role in the biosynthesis and trafficking of glycosaminoglycans and glycoproteins to produce a proper functioning extracellular matrix. Required for extracellular matrix mineralization. Also involved in the regulation of cellular calcium homeostasis. Does not show transport activity towards bile acids or steroid sulfates. The sequence is that of Sodium/bile acid cotransporter 7 (slc10a7) from Danio rerio (Zebrafish).